The following is a 338-amino-acid chain: tRNA N6-adenosine threonylcarbamoyltransferase (338 aa).

Residues histidine 114 and histidine 118 each contribute to the Fe cation site. Residues 136–140 (LVSGG), aspartate 169, glycine 182, aspartate 186, and asparagine 275 each bind substrate. Aspartate 301 is a binding site for Fe cation.

The protein belongs to the KAE1 / TsaD family. It depends on Fe(2+) as a cofactor.

It is found in the cytoplasm. It catalyses the reaction L-threonylcarbamoyladenylate + adenosine(37) in tRNA = N(6)-L-threonylcarbamoyladenosine(37) in tRNA + AMP + H(+). In terms of biological role, required for the formation of a threonylcarbamoyl group on adenosine at position 37 (t(6)A37) in tRNAs that read codons beginning with adenine. Is involved in the transfer of the threonylcarbamoyl moiety of threonylcarbamoyl-AMP (TC-AMP) to the N6 group of A37, together with TsaE and TsaB. TsaD likely plays a direct catalytic role in this reaction. The polypeptide is tRNA N6-adenosine threonylcarbamoyltransferase (Streptococcus equi subsp. equi (strain 4047)).